The chain runs to 387 residues: 23S rRNA (uracil(747)-C(5))-methyltransferase RlmC (387 aa).

4 residues coordinate [4Fe-4S] cluster: cysteine 3, cysteine 11, cysteine 14, and cysteine 86. S-adenosyl-L-methionine is bound by residues glutamine 211, phenylalanine 240, glutamate 269, and asparagine 319. Residue cysteine 346 is the Nucleophile of the active site.

It belongs to the class I-like SAM-binding methyltransferase superfamily. RNA M5U methyltransferase family. RlmC subfamily.

The enzyme catalyses uridine(747) in 23S rRNA + S-adenosyl-L-methionine = 5-methyluridine(747) in 23S rRNA + S-adenosyl-L-homocysteine + H(+). Functionally, catalyzes the formation of 5-methyl-uridine at position 747 (m5U747) in 23S rRNA. This Pasteurella multocida (strain Pm70) protein is 23S rRNA (uracil(747)-C(5))-methyltransferase RlmC.